We begin with the raw amino-acid sequence, 119 residues long: Membrane-anchored ubiquitin-fold protein 1 (119 aa).

Positions phenylalanine 9 to cysteine 75 constitute a Ubiquitin-like domain. Cysteine 116 carries the cysteine methyl ester modification. Cysteine 116 carries S-farnesyl cysteine lipidation. The propeptide at serine 117–methionine 119 is removed in mature form.

It localises to the cell membrane. Its function is as follows. May serve as docking site to facilitate the association of other proteins to the plasma membrane. This chain is Membrane-anchored ubiquitin-fold protein 1 (MUB1), found in Oryza sativa subsp. japonica (Rice).